Consider the following 70-residue polypeptide: Large ribosomal subunit protein bL31 (70 aa).

Zn(2+) is bound by residues C16, C18, C37, and C40.

Belongs to the bacterial ribosomal protein bL31 family. Type A subfamily. As to quaternary structure, part of the 50S ribosomal subunit. It depends on Zn(2+) as a cofactor.

In terms of biological role, binds the 23S rRNA. The protein is Large ribosomal subunit protein bL31 of Actinobacillus pleuropneumoniae serotype 5b (strain L20).